The primary structure comprises 367 residues: MQRNSLVNIKLNANSPSKKTTTRPNTSRINKPWRISHSPQQRNPNSKIPSPVREKLNRLPVNNKKFLDMESSKIPSPIRKATSSKMIHENKKLPKFKSLSLDDFELGKKLGKGKFGKVYCVRHRSTGYICALKVMEKEEIIKYNLQKQFRREVEIQTSLNHPNLTKSYGYFHDEKRVYLLMEYLVNGEMYKLLRLHGPFNDILASDYIYQIANALDYMHKKNIIHRDIKPENILIGFNNVIKLTDFGWSIINPPENRRKTVCGTIDYLSPEMVESREYDHTIDAWALGVLAFELLTGAPPFEEEMKDTTYKRIAALDIKMPSNISQDAQDLILKLLKYDPKDRMRLGDVKMHPWILRNKPFWENKRL.

2 stretches are compositionally biased toward polar residues: residues 1–29 (MQRNSLVNIKLNANSPSKKTTTRPNTSRI) and 37–48 (HSPQQRNPNSKI). The segment at 1 to 52 (MQRNSLVNIKLNANSPSKKTTTRPNTSRINKPWRISHSPQQRNPNSKIPSPV) is disordered. Ser-5 carries the post-translational modification Phosphoserine; by autocatalysis. Ser-76 is modified (phosphoserine). Positions 104 to 355 (FELGKKLGKG…LGDVKMHPWI (252 aa)) constitute a Protein kinase domain. Residues 110–118 (LGKGKFGKV) and Lys-133 contribute to the ATP site. The active-site Proton acceptor is Asp-227. Thr-260 is subject to Phosphothreonine; by autocatalysis.

Belongs to the protein kinase superfamily. Ser/Thr protein kinase family. Aurora subfamily. As to quaternary structure, component of the CPC complex at least composed of IPL1, BIR1 and SLI15.

Its subcellular location is the nucleus. The protein resides in the cytoplasm. It localises to the cytoskeleton. The protein localises to the spindle. It is found in the chromosome. Its subcellular location is the centromere. The protein resides in the kinetochore. It carries out the reaction L-seryl-[protein] + ATP = O-phospho-L-seryl-[protein] + ADP + H(+). It catalyses the reaction L-threonyl-[protein] + ATP = O-phospho-L-threonyl-[protein] + ADP + H(+). Component of the chromosomal passenger complex (CPC), a complex that acts as a key regulator of chromosome segregation and cytokinesis. Has a role in error-correction of aberrent kinetochore-microtubule attachments to ensure that sister kinetochores become bioriented and connect to opposite poles by promoting spindle assembly checkpoint signaling. Acts in opposition to the phosphatase PP1. Not required for kinetochore detachment from microtubules during replication of centromeric DNA. Phosphorylates histone H3 to form H3S10ph during mitosis and meiosis. Phosphorylates CNN1, which contributes to the enrichment of CNN1 on anaphase kinetochores. Phosphorylates RGD1. The sequence is that of Aurora kinase (IPL1) from Saccharomyces cerevisiae (strain ATCC 204508 / S288c) (Baker's yeast).